Here is a 423-residue protein sequence, read N- to C-terminus: Maltoporin 1 (423 aa).

The first 23 residues, 1-23 (MNTTLRALSVALAAALIAPSAFA), serve as a signal peptide directing secretion.

Belongs to the porin LamB (TC 1.B.3) family. Homotrimer formed of three 18-stranded antiparallel beta-barrels, containing three independent channels.

It localises to the cell outer membrane. The enzyme catalyses beta-maltose(in) = beta-maltose(out). Involved in the transport of maltose and maltodextrins. The sequence is that of Maltoporin 1 from Klebsiella pneumoniae subsp. pneumoniae (strain ATCC 700721 / MGH 78578).